Here is a 613-residue protein sequence, read N- to C-terminus: DNA mismatch repair protein MutL (613 aa).

The segment at 364 to 393 (EPAVARQPEAPRYSSGASAPRPTGANYPHA) is disordered.

It belongs to the DNA mismatch repair MutL/HexB family.

Functionally, this protein is involved in the repair of mismatches in DNA. It is required for dam-dependent methyl-directed DNA mismatch repair. May act as a 'molecular matchmaker', a protein that promotes the formation of a stable complex between two or more DNA-binding proteins in an ATP-dependent manner without itself being part of a final effector complex. The sequence is that of DNA mismatch repair protein MutL from Enterobacter sp. (strain 638).